Reading from the N-terminus, the 345-residue chain is Phosphoribosylformylglycinamidine cyclo-ligase (345 aa).

The protein belongs to the AIR synthase family.

It localises to the cytoplasm. The catalysed reaction is 2-formamido-N(1)-(5-O-phospho-beta-D-ribosyl)acetamidine + ATP = 5-amino-1-(5-phospho-beta-D-ribosyl)imidazole + ADP + phosphate + H(+). The protein operates within purine metabolism; IMP biosynthesis via de novo pathway; 5-amino-1-(5-phospho-D-ribosyl)imidazole from N(2)-formyl-N(1)-(5-phospho-D-ribosyl)glycinamide: step 2/2. The sequence is that of Phosphoribosylformylglycinamidine cyclo-ligase from Bifidobacterium longum subsp. infantis (strain ATCC 15697 / DSM 20088 / JCM 1222 / NCTC 11817 / S12).